Here is a 532-residue protein sequence, read N- to C-terminus: MAPSSPRPALPALLVLLGALFPGPGNAQTSVSPPKVILPRGGSVLVTCSTSCDQPTLLGIETPLPKKELLLLGNNQKVYELSNVQEDSQPMCYSNCPDGQSTAKTFLTVYWTPERVELAPLPSWQPVGKDLTLRCQVEGGAPRANLIVVLLRGEEELKREPAVGEPAEVTTTVPVEKDHHGANFLCRTELDLRPQGLKLFENTSAPYQLQTFVLPATPPQLVSPRVLEVDTQGTVVCSLDGLFPVSEAQVHLALGDQRLNPTVTYGNDSFSAKASVSVTAEDEGTQWLTCAVILGTQSQETLQTVTIYSFPAPNVILTKPEVSEGTEVTVKCEAHPRAKVTLNGVPAQPPGPRTQFLLKATPEDNGRSFSCSATLEVAGQLIHKNQTRELRVLYGPRLDERDCPGNWTWPENSQQTPMCQAWGNPLPELKCLKDGTFPLPVGESVTVTRDLEGTYLCRARSTQGEVTREVTVNVLSPRYEFVIIAVVAAAVIMGTAGLSTYLYNRQRKIRKYRLQQAQKGTPMKPNTQATPP.

A signal peptide spans 1–27 (MAPSSPRPALPALLVLLGALFPGPGNA). Residues 28-480 (QTSVSPPKVI…TVNVLSPRYE (453 aa)) lie on the Extracellular side of the membrane. Ig-like C2-type domains follow at residues 41 to 103 (GGSV…QSTA) and 128 to 193 (GKDL…LDLR). Intrachain disulfides connect C48–C92, C52–C96, and C135–C186. The short motif at 152–154 (RGE) is the Cell attachment site; atypical element. N202 and N267 each carry an N-linked (GlcNAc...) asparagine glycan. 2 consecutive Ig-like C2-type domains span residues 230-297 (DTQG…LGTQ) and 325-378 (GTEV…LEVA). Intrachain disulfides connect C237/C290 and C332/C371. 2 N-linked (GlcNAc...) asparagine glycosylation sites follow: N385 and N406. 3 disulfide bridges follow: C403–C419, C419–C457, and C431–C457. The 53-residue stretch at 412-464 (NSQQTPMCQAWGNPLPELKCLKDGTFPLPVGESVTVTRDLEGTYLCRARSTQG) folds into the Ig-like C2-type 5 domain. A helical transmembrane segment spans residues 481-503 (FVIIAVVAAAVIMGTAGLSTYLY). The Cytoplasmic portion of the chain corresponds to 504-532 (NRQRKIRKYRLQQAQKGTPMKPNTQATPP). Phosphothreonine is present on residues T521 and T530.

Belongs to the immunoglobulin superfamily. ICAM family. Homodimer. Interacts with MUC1 and promotes cell aggregation in epithelial cells. Interacts with ARHGEF26/SGEF. Interacts (on T cell side) with CD81, CD247 and CD9 at immunological synapses between antigen-presenting cells and T cells. In terms of processing, monoubiquitinated, which is promoted by MARCH9 and leads to endocytosis.

The protein resides in the membrane. In terms of biological role, ICAM proteins are ligands for the leukocyte adhesion protein LFA-1 (integrin alpha-L/beta-2). During leukocyte trans-endothelial migration, ICAM1 engagement promotes the assembly of endothelial apical cups through ARHGEF26/SGEF and RHOG activation. This is Intercellular adhesion molecule 1 (ICAM1) from Gorilla gorilla gorilla (Western lowland gorilla).